Reading from the N-terminus, the 358-residue chain is Histidinol-phosphate aminotransferase (358 aa).

Position 218 is an N6-(pyridoxal phosphate)lysine (K218).

Belongs to the class-II pyridoxal-phosphate-dependent aminotransferase family. Histidinol-phosphate aminotransferase subfamily. In terms of assembly, homodimer. Pyridoxal 5'-phosphate serves as cofactor.

The enzyme catalyses L-histidinol phosphate + 2-oxoglutarate = 3-(imidazol-4-yl)-2-oxopropyl phosphate + L-glutamate. It functions in the pathway amino-acid biosynthesis; L-histidine biosynthesis; L-histidine from 5-phospho-alpha-D-ribose 1-diphosphate: step 7/9. The chain is Histidinol-phosphate aminotransferase from Dehalococcoides mccartyi (strain ATCC BAA-2266 / KCTC 15142 / 195) (Dehalococcoides ethenogenes (strain 195)).